The sequence spans 349 residues: N-acetyl-gamma-glutamyl-phosphate reductase (349 aa).

Residue cysteine 149 is part of the active site.

The protein belongs to the NAGSA dehydrogenase family. Type 1 subfamily.

The protein resides in the cytoplasm. The enzyme catalyses N-acetyl-L-glutamate 5-semialdehyde + phosphate + NADP(+) = N-acetyl-L-glutamyl 5-phosphate + NADPH + H(+). Its pathway is amino-acid biosynthesis; L-arginine biosynthesis; N(2)-acetyl-L-ornithine from L-glutamate: step 3/4. Its function is as follows. Catalyzes the NADPH-dependent reduction of N-acetyl-5-glutamyl phosphate to yield N-acetyl-L-glutamate 5-semialdehyde. The polypeptide is N-acetyl-gamma-glutamyl-phosphate reductase (Acinetobacter baumannii (strain ACICU)).